The chain runs to 193 residues: Ribonuclease HII (193 aa).

Residues 15 to 193 form the RNase H type-2 domain; the sequence is YIVAGVDEAG…SYHRKSFKFC (179 aa). Residues aspartate 21, glutamate 22, and aspartate 112 each coordinate a divalent metal cation.

It belongs to the RNase HII family. Mn(2+) is required as a cofactor. The cofactor is Mg(2+).

It is found in the cytoplasm. It catalyses the reaction Endonucleolytic cleavage to 5'-phosphomonoester.. In terms of biological role, endonuclease that specifically degrades the RNA of RNA-DNA hybrids. The protein is Ribonuclease HII of Rickettsia typhi (strain ATCC VR-144 / Wilmington).